The following is a 137-amino-acid chain: Protein MGF 110-7L (137 aa).

Positions 1 to 20 (MLVIILGIIGLLASSNLVSS) are cleaved as a signal peptide. Asparagine 69, asparagine 70, and asparagine 105 each carry an N-linked (GlcNAc...) asparagine; by host glycan.

This sequence belongs to the asfivirus MGF 110 family.

Plays a role in virus cell tropism, and may be required for efficient virus replication in macrophages. The polypeptide is Protein MGF 110-7L (African swine fever virus (isolate Tick/South Africa/Pretoriuskop Pr4/1996) (ASFV)).